The chain runs to 179 residues: Putative mediator of RNA polymerase II transcription subunit 28 (179 aa).

The stretch at Ser81–Tyr119 forms a coiled coil.

This sequence belongs to the Mediator complex subunit 28 family. In terms of assembly, component of the Mediator complex.

The protein localises to the nucleus. Component of the Mediator complex, a coactivator involved in the regulated transcription of nearly all RNA polymerase II-dependent genes. Mediator functions as a bridge to convey information from gene-specific regulatory proteins to the basal RNA polymerase II transcription machinery. Mediator is recruited to promoters by direct interactions with regulatory proteins and serves as a scaffold for the assembly of a functional preinitiation complex with RNA polymerase II and the general transcription factors. The sequence is that of Putative mediator of RNA polymerase II transcription subunit 28 (med28) from Dictyostelium discoideum (Social amoeba).